A 450-amino-acid chain; its full sequence is Phosphoglucosamine mutase (450 aa).

Catalysis depends on S101, which acts as the Phosphoserine intermediate. Residues S101, D240, D242, and D244 each contribute to the Mg(2+) site. S101 is modified (phosphoserine).

It belongs to the phosphohexose mutase family. The cofactor is Mg(2+). Activated by phosphorylation.

It carries out the reaction alpha-D-glucosamine 1-phosphate = D-glucosamine 6-phosphate. Catalyzes the conversion of glucosamine-6-phosphate to glucosamine-1-phosphate. This is Phosphoglucosamine mutase from Streptococcus gordonii (strain Challis / ATCC 35105 / BCRC 15272 / CH1 / DL1 / V288).